The chain runs to 508 residues: MNNTYYITTPIYYVNDIPHIGHAYTSVASDVIARFMRLRGFDVMFLTGTDEHGQKVEKAAINKNIDPQKFTDQTSESFRHLMTAMHISNDDFIRTTEHRHKKAVAVFWQKLLDNGTIYEGFYEGWYAVRDEAFFDESELTRDGLAPTGAPVEWVKEPSYFFNLSKWQDKLLEFYEANPDFIRPISRRNEVISFVKSGLKDLSVSRTTFNWGIKVPNNEKHVIYVWLDALANYISALGYLDEQSNYNKFWPADLHVVGKDILRFHAVYWPAFLMAAEVPLPKTIMAHGWWTNEGQKISKSLGNTIDPIKLIDEFGVDQVRYFLMREVTFGADGNFARSNLITRINSELSNKIGNLLQRTTSFVYKNNDAKVPLLTQGVIDKIYELPILKTASKFVEQNILLMDKTEINKILENIINLAEEANIYIDSEAPWNLKKTDPDKMLEVLYALLEVLRYIAIMLLPFIPSSANKMLDQLGVNKEERLFKHLIRDYTLTAGSNILEPTIIFPKFE.

The 'HIGH' region signature appears at Tyr12 to His22. Residues Lys295–Ser299 carry the 'KMSKS' region motif. Lys298 provides a ligand contact to ATP.

The protein belongs to the class-I aminoacyl-tRNA synthetase family. MetG type 2B subfamily. Monomer.

It is found in the cytoplasm. It carries out the reaction tRNA(Met) + L-methionine + ATP = L-methionyl-tRNA(Met) + AMP + diphosphate. Its function is as follows. Is required not only for elongation of protein synthesis but also for the initiation of all mRNA translation through initiator tRNA(fMet) aminoacylation. The sequence is that of Methionine--tRNA ligase from Rickettsia conorii (strain ATCC VR-613 / Malish 7).